Consider the following 357-residue polypeptide: UDP-N-acetylglucosamine--N-acetylmuramyl-(pentapeptide) pyrophosphoryl-undecaprenol N-acetylglucosamine transferase (357 aa).

UDP-N-acetyl-alpha-D-glucosamine is bound by residues 13–15, Arg166, Ser196, and Gln291; that span reads SAG.

It belongs to the glycosyltransferase 28 family. MurG subfamily.

Its subcellular location is the cell membrane. It carries out the reaction di-trans,octa-cis-undecaprenyl diphospho-N-acetyl-alpha-D-muramoyl-L-alanyl-D-glutamyl-meso-2,6-diaminopimeloyl-D-alanyl-D-alanine + UDP-N-acetyl-alpha-D-glucosamine = di-trans,octa-cis-undecaprenyl diphospho-[N-acetyl-alpha-D-glucosaminyl-(1-&gt;4)]-N-acetyl-alpha-D-muramoyl-L-alanyl-D-glutamyl-meso-2,6-diaminopimeloyl-D-alanyl-D-alanine + UDP + H(+). It functions in the pathway cell wall biogenesis; peptidoglycan biosynthesis. In terms of biological role, cell wall formation. Catalyzes the transfer of a GlcNAc subunit on undecaprenyl-pyrophosphoryl-MurNAc-pentapeptide (lipid intermediate I) to form undecaprenyl-pyrophosphoryl-MurNAc-(pentapeptide)GlcNAc (lipid intermediate II). This is UDP-N-acetylglucosamine--N-acetylmuramyl-(pentapeptide) pyrophosphoryl-undecaprenol N-acetylglucosamine transferase from Clostridium perfringens (strain SM101 / Type A).